We begin with the raw amino-acid sequence, 333 residues long: Ribosomal RNA small subunit methyltransferase C (333 aa).

Belongs to the methyltransferase superfamily. RsmC family. As to quaternary structure, monomer.

It is found in the cytoplasm. The enzyme catalyses guanosine(1207) in 16S rRNA + S-adenosyl-L-methionine = N(2)-methylguanosine(1207) in 16S rRNA + S-adenosyl-L-homocysteine + H(+). Specifically methylates the guanine in position 1207 of 16S rRNA in the 30S particle. The chain is Ribosomal RNA small subunit methyltransferase C from Chromohalobacter salexigens (strain ATCC BAA-138 / DSM 3043 / CIP 106854 / NCIMB 13768 / 1H11).